Consider the following 369-residue polypeptide: CASP-like protein 4U1 (369 aa).

Positions methionine 1–serine 162 are disordered. Residues methionine 1–glutamate 222 lie on the Cytoplasmic side of the membrane. A compositionally biased stretch (pro residues) spans threonine 7–proline 23. Over residues serine 36–alanine 51 the composition is skewed to basic and acidic residues. 2 stretches are compositionally biased toward low complexity: residues alanine 87–glutamate 96 and serine 114–proline 127. A helical membrane pass occupies residues leucine 223–alanine 243. At serine 244 to arginine 262 the chain is on the extracellular side. A helical transmembrane segment spans residues tyrosine 263–isoleucine 283. Topologically, residues arginine 284–tyrosine 300 are cytoplasmic. The helical transmembrane segment at cysteine 301 to alanine 321 threads the bilayer. Residues serine 322–lysine 339 lie on the Extracellular side of the membrane. The helical transmembrane segment at isoleucine 340 to isoleucine 360 threads the bilayer. Topologically, residues serine 361–valine 369 are cytoplasmic.

It belongs to the Casparian strip membrane proteins (CASP) family. Homodimer and heterodimers.

The protein localises to the cell membrane. The protein is CASP-like protein 4U1 of Zea mays (Maize).